The chain runs to 798 residues: MLMLMLVAAVTMWLRPLVTAQLCRSRTVRTGKVFNLIQDVQGDRLYFHPTTTRLIKHPCEKNIALYLGKQVFFTMDNFETSLLPFTIPTSMQVGVPEVTSAHFAGSLLLLVVDQKVYIYDYENNSWSMSLGIKHPVTHVSGDNCCYTGSLFCVHVSNLVFAYFRGDQISQTYIYYSNTGGFSFWKYHYDRQAEIIGSLGGIFHFFSLSQVAMLVVNQGKGMFKYSDHPLNRSFGLSFDYNGTLDILIAPGQRGILLLWFENSLLFSHNAGQLVDTVRVKKGDQTLFSSIFEAKITIHNIAVTENELAVITREDNLYYGNLGIVPSSIIKFADQYIWSEDVALMFRSPGTLEILTPLRDTAFPAFDFQKCLVNIQALLMDPELHVGKCKIEFLTGEFIYRMYTIDMHSQLELTASLIPQPGTSLIPLVMVSNPHSLGFQATFYENGYTSDGNTKYKLDIFLKQQQHWGRTDSNFTSSLKKATMSTLTVDIANKEISCVDIKPLSTLISVGCDLDKKIVIQNKVSACSMGILDPLTLQDNYSFIIEKEFYDPGFQGQQSSEDLHVFYSYQQLGCPLLVYYDTLWKPVVELWRKDSFQEVIDAEYVLLEVNGQFSYSYSLTAQSAMCTSQPQNWTTMIKEFGGPFFWNRENYVSCHDPNNNAPLRWPDVQYQILGGRTANQIIFGHNGFYVFYISIVDPYYSYCQLETIFSIYVYGAFPVQLVSAGVVILLIISSILGSVWLAYKTPKLLRTARGRRIKKCATQLCRRCKTVCQFRASATARAGTEPPGRHRTPHGGRSDH.

A signal peptide spans M1–A20. The Extracellular segment spans residues Q21–G723. Intrachain disulfides connect C23/C369, C59/C145, C144/C152, C387/C496, C510/C701, C525/C572, and C624/C652. N123 carries an N-linked (GlcNAc...) asparagine glycan. N230, N240, N472, N538, and N630 each carry an N-linked (GlcNAc...) asparagine glycan. A helical transmembrane segment spans residues V724 to K745. The Cytoplasmic portion of the chain corresponds to L746–H798.

It belongs to the CATSPERD family. In terms of assembly, component of the CatSper complex or CatSpermasome composed of the core pore-forming members CATSPER1, CATSPER2, CATSPER3 and CATSPER4 as well as auxiliary members CATSPERB, CATSPERG, CATSPERD, CATSPERE, CATSPERZ, C2CD6/CATSPERT, TMEM249, TMEM262 and EFCAB9. HSPA1 may be an additional auxiliary complex member. The core complex members CATSPER1, CATSPER2, CATSPER3 and CATSPER4 form a heterotetrameric channel. The auxiliary CATSPERB, CATSPERG, CATSPERD and CATSPERE subunits form a pavilion-like structure over the pore which stabilizes the complex through interactions with CATSPER4, CATSPER3, CATSPER1 and CATSPER2 respectively. TMEM262/CATSPERH interacts with CATSPERB, further stabilizing the complex. C2CD6/CATSPERT interacts at least with CATSPERD and is required for targeting the CatSper complex in the flagellar membrane.

The protein localises to the cell projection. The protein resides in the cilium. Its subcellular location is the flagellum membrane. Functionally, auxiliary component of the CatSper complex, a complex involved in sperm cell hyperactivation. Sperm cell hyperactivation is needed for sperm motility which is essential late in the preparation of sperm for fertilization. Required for CATSPER1 stability before intraflagellar transport and/or incorporation of the CatSper complex channel into the flagellar membrane. This chain is Cation channel sperm-associated auxiliary subunit delta, found in Homo sapiens (Human).